A 7785-amino-acid polypeptide reads, in one-letter code: Probable non-canonical nonribosomal peptide synthetase (NRPS) CymA (7785 aa).

Carrier domains follow at residues 487-562 (TARS…QRQE), 1908-1983 (HART…SEQQ), and 2958-3033 (SPGM…LEGG). O-(pantetheine 4'-phosphoryl)serine occurs at positions 522, 1943, and 2993. The stretch at 3088-3111 (RLALADVVVRHEALRTVFAERAGN) is one LRR 1 repeat. Carrier domains are found at residues 3978–4053 (APRT…SEQQ), 5002–5077 (EPRT…LEAN), and 6389–6464 (GPRD…AQGS). Residues serine 4013, serine 5037, and serine 6424 each carry the O-(pantetheine 4'-phosphoryl)serine modification. Residues 6853 to 6875 (TGVSRVDLSVNAIETFDDHGLPA) form an LRR 2 repeat. Positions 7432-7507 (GPRTPQEEIL…QLAEQLGSDG (76 aa)) constitute a Carrier 7 domain. Serine 7467 bears the O-(pantetheine 4'-phosphoryl)serine mark.

The cofactor is pantetheine 4'-phosphate.

Its function is as follows. Probable non-canonical nonribosomal peptide synthetase (NRPS); part of the gene cluster that mediates the biosynthesis of cyclic heptapeptides, known as cyclomarins and also of cyclic dipeptides, called cyclomarazines, which have both antimicrobial and cytotoxic effects. First, CymD catalyzes the reverse N-prenylation of monomeric L-tryptophan with dimethylallyl diphosphate (DMAPP) to form N-(1,1-dimethylallyl)-tryptophan (r-N-DMAT). The N-(1,1-dimethylallyl)-tryptophan produced by CymD is then combined with a range of standard and nonproteinogenic amino acid substrates to synthesize the peptides, a process that is probably catalyzed by the non-canonical nonribosomal peptide synthetase (NRPS), CymA. Other proteins in the cluster catalyze further modifications of the peptides including CymV which catalyzes the oxidation of olefinic cyclomarins and cyclomarazines to their respective epoxide derivatives. In Salinispora arenicola (strain CNS-205), this protein is Probable non-canonical nonribosomal peptide synthetase (NRPS) CymA.